A 315-amino-acid polypeptide reads, in one-letter code: PIH1 domain-containing protein 2 (315 aa).

The protein belongs to the PIH1 family.

The polypeptide is PIH1 domain-containing protein 2 (Pih1d2) (Mus musculus (Mouse)).